A 650-amino-acid polypeptide reads, in one-letter code: DNA gyrase subunit B (650 aa).

Positions 400–414 (RRSQEARELTRRKSP) are enriched in basic and acidic residues. Residues 400 to 422 (RRSQEARELTRRKSPFDSGSLPG) are disordered. In terms of domain architecture, Toprim spans 435–549 (SELYIVEGDS…QGNIYIAQPP (115 aa)). Mg(2+)-binding residues include glutamate 441, aspartate 514, and aspartate 516.

Belongs to the type II topoisomerase GyrB family. In terms of assembly, heterotetramer, composed of two GyrA and two GyrB chains. In the heterotetramer, GyrA contains the active site tyrosine that forms a transient covalent intermediate with DNA, while GyrB binds cofactors and catalyzes ATP hydrolysis. The cofactor is Mg(2+). Mn(2+) is required as a cofactor. Ca(2+) serves as cofactor.

Its subcellular location is the cytoplasm. It catalyses the reaction ATP-dependent breakage, passage and rejoining of double-stranded DNA.. A type II topoisomerase that negatively supercoils closed circular double-stranded (ds) DNA in an ATP-dependent manner to modulate DNA topology and maintain chromosomes in an underwound state. Negative supercoiling favors strand separation, and DNA replication, transcription, recombination and repair, all of which involve strand separation. Also able to catalyze the interconversion of other topological isomers of dsDNA rings, including catenanes and knotted rings. Type II topoisomerases break and join 2 DNA strands simultaneously in an ATP-dependent manner. The chain is DNA gyrase subunit B from Mycoplasma pneumoniae (strain ATCC 29342 / M129 / Subtype 1) (Mycoplasmoides pneumoniae).